Consider the following 244-residue polypeptide: MHKNTNKSVLVEDLGLIDYQQAWDYQTQLFNSTIEKKLALRDLPEDEQVAPGNFLIFCEHPHVYTLGKSGKREHLLISEAQLQHAQAAYYEINRGGDITYHGPGQLVGYPIFDLDNFFTDIHKYLRYIEEAIILTLADFNIVAGRIDGLTGVWIESDNPLKARKICAMGVKASRWVTMHGFALNVQPDLTYFKNIVPCGIDDKAVTSIEQELNTTVSMQAVKDYLLKHLTALFELHIENTTHTT.

The 189-residue stretch at 49–237 (VAPGNFLIFC…HLTALFELHI (189 aa)) folds into the BPL/LPL catalytic domain. Residues 94–101 (RGGDITYH), 167–169 (AMG), and 180–182 (GFA) each bind substrate. Cysteine 198 serves as the catalytic Acyl-thioester intermediate.

Belongs to the LipB family.

It is found in the cytoplasm. The enzyme catalyses octanoyl-[ACP] + L-lysyl-[protein] = N(6)-octanoyl-L-lysyl-[protein] + holo-[ACP] + H(+). It participates in protein modification; protein lipoylation via endogenous pathway; protein N(6)-(lipoyl)lysine from octanoyl-[acyl-carrier-protein]: step 1/2. Its function is as follows. Catalyzes the transfer of endogenously produced octanoic acid from octanoyl-acyl-carrier-protein onto the lipoyl domains of lipoate-dependent enzymes. Lipoyl-ACP can also act as a substrate although octanoyl-ACP is likely to be the physiological substrate. This Cytophaga hutchinsonii (strain ATCC 33406 / DSM 1761 / CIP 103989 / NBRC 15051 / NCIMB 9469 / D465) protein is Octanoyltransferase.